Here is a 436-residue protein sequence, read N- to C-terminus: MSLNDFLSSVLPVSEQFEYLSLQSIPLETHAVVTPNKDDKRVPKSTIKTQHFFSLFHQGKVFFSLEVYVYVTLWDEADAERLIFVSKADTNGYCNTRVSVRDITKIILEFILSIDPNYYLQKVKPAIRSYKKISPELISAASTPARTLRILARRLKQSGSTVLKEIESPRFQQDLYLSFTCPREILTKICLFTRPASQYLFPDSSKNSKKHILNGEELMKWWGFILDRLLIECFQNDTQAKLRIPGEDPARVRSYLRGMKYPLWQVGDIFTSKENSLAVYNIPLFPDDPKARFIHQLAEEDRLLKVSLSSFWIELQERQEFKLSVTSSVMGISGYSLATPSLFPSSADVIVPKSRKQFRAIKKYITGEEYDTEEGAIEAFTNIRDFLLLRMATNLQSLTGKREHRERNQPVPASNINTLAITMLKPRKKAKALPKT.

Residues 2-404 (SLNDFLSSVL…LQSLTGKREH (403 aa)) form the Rtt109-type HAT domain. Residues 88–90 (ADT) and 97–101 (RVSVR) contribute to the acetyl-CoA site. Residues 128-170 (RSYKKISPELISAASTPARTLRILARRLKQSGSTVLKEIESPR) form an interaction with VPS75 region. Acetyl-CoA is bound by residues F192, A196, 211 to 213 (HIL), and W221. D288 serves as the catalytic Proton donor/acceptor. K290 is modified (N6-acetyllysine; by autocatalysis). The tract at residues 419–433 (LAITMLKPRKKAKAL) is interaction with ASF1.

This sequence belongs to the RTT109 family. Forms a complex composed of two RTT109 subunits and one VPS75 homodimer; each RTT109 subunit interacts predominantly with VPS75 instead of interacting with the other RTT109 subunit. Interacts with VPS75; the interaction is direct. Interacts (via C-terminus) with ASF1; the interaction is direct. Interacts with histone H3/H4 heterodimers via histone H3.

Its subcellular location is the nucleus. The catalysed reaction is L-lysyl-[histone] + acetyl-CoA = N(6)-acetyl-L-lysyl-[histone] + CoA + H(+). The enzyme catalyses L-lysyl-[protein] + acetyl-CoA = N(6)-acetyl-L-lysyl-[protein] + CoA + H(+). In terms of biological role, histone chaperone-dependent acetylase that modifies 'Lys-9', 'Lys-14', 'Lys-23', 'Lys-27', and 'Lys-56' on histone H3 (H3K9Ac, H3K14Ac and H3K23Ac, H3K27Ac, and H3K56Ac) to promote nucleosome assembly, genomic stability, DNA repair and transcriptional regulation during mitotic S-phase. Its residue selectivity is influenced by the acetylation status of histone H3, and also the presence of histone chaperone ASF1 that shifts selectivity to 'Lys-56' when H3K14Ac is already present. H3K56 acetylation weakens the interaction between the histone core and the surrounding DNA in the nucleosomal particle and drives chromatin disassembly. Autoacetylates. Independently of acetyltransferase activity, stimulates histone deposition by VPS75. Involved in regulation of Ty1 transposition. The chain is Histone acetyltransferase RTT109 from Saccharomyces cerevisiae (strain ATCC 204508 / S288c) (Baker's yeast).